A 1014-amino-acid chain; its full sequence is Exportin-T (1014 aa).

This sequence belongs to the exportin family.

The protein resides in the nucleus. It is found in the cytoplasm. Its function is as follows. tRNA nucleus export receptor which facilitates tRNA translocation across the nuclear pore complex. Involved in pre-tRNA splicing, probably by affecting the interaction of pre-tRNA with splicing endonuclease. This Podospora anserina (strain S / ATCC MYA-4624 / DSM 980 / FGSC 10383) (Pleurage anserina) protein is Exportin-T (LOS1).